Here is a 52-residue protein sequence, read N- to C-terminus: UPF0391 membrane protein ABAYE0050 (52 aa).

Transmembrane regions (helical) follow at residues 6–26 (IIFAVIALIASLLGFGGVAGL) and 30–50 (FAVILLVIAVILAVIGFISRG).

Belongs to the UPF0391 family.

Its subcellular location is the cell membrane. This Acinetobacter baumannii (strain AYE) protein is UPF0391 membrane protein ABAYE0050.